A 534-amino-acid chain; its full sequence is Peptide chain release factor 3 (534 aa).

Positions 9–278 (ARRRTFAIIS…FFVEHAPSPQ (270 aa)) constitute a tr-type G domain. GTP contacts are provided by residues 18–25 (SHPDAGKT), 86–90 (DTPGH), and 140–143 (NKLD).

It belongs to the TRAFAC class translation factor GTPase superfamily. Classic translation factor GTPase family. PrfC subfamily.

The protein localises to the cytoplasm. Functionally, increases the formation of ribosomal termination complexes and stimulates activities of RF-1 and RF-2. It binds guanine nucleotides and has strong preference for UGA stop codons. It may interact directly with the ribosome. The stimulation of RF-1 and RF-2 is significantly reduced by GTP and GDP, but not by GMP. This chain is Peptide chain release factor 3, found in Xylella fastidiosa (strain M23).